The chain runs to 754 residues: Cytosolic neutral trehalase (754 aa).

The span at 1 to 10 (MDGKVNNNPP) shows a compositional bias: polar residues. 2 disordered regions span residues 1–47 (MDGK…LSKN) and 54–73 (TFSV…YTSP). Residues D117, D119, N121, Q123, and D128 each contribute to the Ca(2+) site. Substrate is bound by residues R305, 312–313 (WD), N349, 358–360 (RSQ), E427, R476, and G479. Active-site proton donor/acceptor residues include D481 and E676.

This sequence belongs to the glycosyl hydrolase 37 family. It depends on Ca(2+) as a cofactor.

It is found in the cytoplasm. It carries out the reaction alpha,alpha-trehalose + H2O = alpha-D-glucose + beta-D-glucose. It participates in carbohydrate degradation. In terms of biological role, hydrolyzes intracellular trehalose to glucose. The disaccharide trehalose serves as a storage molecule for energy and carbohydrates that is mobilized during nutrient stress. In Kluyveromyces lactis (strain ATCC 8585 / CBS 2359 / DSM 70799 / NBRC 1267 / NRRL Y-1140 / WM37) (Yeast), this protein is Cytosolic neutral trehalase.